Reading from the N-terminus, the 254-residue chain is Chalcone isomerase cfoK (254 aa).

Residues H33 and Y50 contribute to the active site.

It catalyses the reaction a chalcone = a flavanone.. The protein operates within secondary metabolite biosynthesis; flavonoid biosynthesis. Chalcone isomerase; part of the gene cluster that mediates the biosynthesis of chlorflavonin, a fungal flavonoid with acetolactate synthase inhibitory activity. Within the pathway, cfoK acts as chalcone isomerase (CHI), the key enzyme responsible for the tricyclic formation of flavanone through Michael-type intramolecular cyclization of chalcone. The hydrogen at C2'-OH is extracted by the imidazole ring of His-33, which induces the oxa-Michael addition to form the intermediate enolate through 6-endo-trig mode cyclization. The enolate can then be stabilized by a hydrogen bond with the Tyr-50 residue. Following enol tautomerization, the C ring, a gamma-pyranone ring, is formed. The pathway begins with the PKS-NRPS hybrid synthetase cfoA that uses benzoic acid or p-hydroxybenzoic acid as a starter unit with four rounds of chain elongation using malonyl-CoA to form the chalcone skeleton. Then, a new type of chalcone isomerase, cfoK, catalyzes the conversion of the chalcone into a flavanone by a histidine-mediated oxa-Michael addition mechanism. The desaturation of flavanone to flavone is catalyzed by a new type of flavone synthase, the flavin mononucleotide (FMN)-dependent oxidoreductase cfoJ. Monooxygenases cfoF, cfoG, and P450 cfoH are responsible for the hydroxylation of the flavonoid skeleton at sites C3, C8, and C2', respectively. Like cfoF, the dehydratase cfoI plays also a role in the hydroxylation of position C3. Methyltransferases cfoB, cfoC, and cfoD then catalyze the methylation of C7-OH, C8-OH, and C3-OH, respectively. Finally, the monooxygenase cfoE is responsible for the chlorination of flavonoid at position C3'. The polypeptide is Chalcone isomerase cfoK (Aspergillus candidus).